The primary structure comprises 384 residues: MRIIKCLDQIFRPVLPNVNINNIQKNKKINILYFIDVSKFHVFEQLLLEESLFRISNNTTEGLNNIGFVIVNNTCEEMNESKGNECIFNNKKCVILGISNKIKDHIKDTNYIKENKISLIKRFTGGGTIYINKNSLLVSLILPHKFEKNKKIYPSNITEWSYNYFYNTSKQIYDKTQINNEKNSLNKNHILFNQYFNYYENDYVYKDYDEHNKNIILKKVGGNAQSFARNYFVHHTSYIWTCDYKEMNNILLNPSKQPIYRNKRKHQHFLQSIKLCLHDDIHTPNIFIEKLIKHIKHIINYKNITDQHDYWFFNKINLKNINDHILRNSEHFDDIYVADMNLLQCIFNYYNNSSLFNNMRSTYFLDLEGKKVSDRYYDIPTYFL.

In terms of domain architecture, BPL/LPL catalytic spans 79 to 303; sequence NESKGNECIF…HIKHIINYKN (225 aa).

It localises to the mitochondrion. Its subcellular location is the plastid. It is found in the apicoplast. In terms of biological role, in the mitochondrion and together with LipL1, involved in the lipoylation of the E2 component of the branched chain alpha-ketoacid dehydrogenase complex BCKDH-E2/BCDH and the E2 component of the alpha -ketoglutarate dehydrogenase complex KDH. LipL1 is responsible for catalysing the activation of lipoate, forming lipoyl-AMP while LipL2 is required but is not capable of catalyzing this reaction. Although its role is unclear, it may catalyze the transfer of lipoyl groups from lipoyl-AMP to BCDH and KDH or act as an effector protein. The polypeptide is Inactive lipoate--protein ligase 2 (Plasmodium falciparum (isolate 3D7)).